The sequence spans 136 residues: UPF0299 membrane protein PM0880 (136 aa).

4 consecutive transmembrane segments (helical) span residues isoleucine 5–isoleucine 25, leucine 29–phenylalanine 49, tyrosine 67–phenylalanine 87, and valine 92–serine 112.

The protein belongs to the UPF0299 family.

Its subcellular location is the cell inner membrane. The protein is UPF0299 membrane protein PM0880 of Pasteurella multocida (strain Pm70).